Here is a 56-residue protein sequence, read N- to C-terminus: Preprotein translocase subunit SecG (56 aa).

Topologically, residues 1–29 (MAKEKATLPPTGAGLMRFFDEDTRAVKVS) are cytoplasmic. A helical transmembrane segment spans residues 30-49 (PKGVIALTLLLIAFEFILHM). Residues 50 to 56 (FGSSIFG) are Extracellular-facing.

It belongs to the SEC61-beta family. In terms of assembly, component of the protein translocase complex. Heterotrimer consisting of alpha (SecY), beta (SecG) and gamma (SecE) subunits. Can form oligomers of the heterotrimer.

Its subcellular location is the cell membrane. Its function is as follows. Involved in protein export. The function of the beta subunit is unknown, but it may be involved in stabilization of the trimeric complex. The protein is Preprotein translocase subunit SecG of Thermococcus kodakarensis (strain ATCC BAA-918 / JCM 12380 / KOD1) (Pyrococcus kodakaraensis (strain KOD1)).